The sequence spans 172 residues: Myosin regulatory light chain 2, smooth muscle major isoform (172 aa).

The segment covering 1-16 (MSSKRAKAKTTKKRPQ) has biased composition (basic residues). A disordered region spans residues 1 to 20 (MSSKRAKAKTTKKRPQRATS). At Ser-2 the chain carries N-acetylserine. 3 EF-hand domains span residues 29-64 (SQIQEFKEAFNMIDQNRDGFIDKEDLHDMLASMGKN), 98-133 (DPEDVIRNAFACFDEEASGFIHEDHLRELLTTMGDR), and 134-169 (FTDEEVDEMYREAPIDKKGNFNYVEFTRILKHGAKD). Positions 42, 44, 46, and 53 each coordinate Ca(2+).

As to quaternary structure, myosin is a hexamer of 2 heavy chains and 4 light chains.

In terms of biological role, myosin regulatory subunit that plays an important role in regulation of both smooth muscle and nonmuscle cell contractile activity. Implicated in cytokinesis, receptor capping, and cell locomotion. This chain is Myosin regulatory light chain 2, smooth muscle major isoform, found in Gallus gallus (Chicken).